Reading from the N-terminus, the 911-residue chain is Beta-galactosidase 12 (911 aa).

Residues M1–A25 form the signal peptide. The active-site Proton donor is E192. E262 (nucleophile) is an active-site residue. N263, N389, N473, and N777 each carry an N-linked (GlcNAc...) asparagine glycan. Positions E744 to A831 constitute an SUEL-type lectin domain.

It belongs to the glycosyl hydrolase 35 family.

It is found in the secreted. The protein resides in the extracellular space. Its subcellular location is the apoplast. The catalysed reaction is Hydrolysis of terminal non-reducing beta-D-galactose residues in beta-D-galactosides.. The polypeptide is Beta-galactosidase 12 (Oryza sativa subsp. japonica (Rice)).